The sequence spans 87 residues: Cell division topological specificity factor (87 aa).

The protein belongs to the MinE family.

In terms of biological role, prevents the cell division inhibition by proteins MinC and MinD at internal division sites while permitting inhibition at polar sites. This ensures cell division at the proper site by restricting the formation of a division septum at the midpoint of the long axis of the cell. The protein is Cell division topological specificity factor of Vibrio vulnificus (strain CMCP6).